Reading from the N-terminus, the 306-residue chain is Glutathione transport system permease protein GsiC (306 aa).

The Cytoplasmic segment spans residues 1–8 (MLNYVIKR). A helical membrane pass occupies residues 9-29 (LLGLIPTLFIVSVLVFLFVHM). Over 30–102 (LPGDPARLIA…SRFMPTLWLT (73 aa)) the chain is Periplasmic. The 198-residue stretch at 95 to 292 (FMPTLWLTIT…LEFILINLVV (198 aa)) folds into the ABC transmembrane type-1 domain. The helical transmembrane segment at 103-123 (ITSMVWAVIFGMAAGIIAAVW) threads the bilayer. At 124–134 (RNRWPDRLSMT) the chain is on the cytoplasmic side. Residues 135 to 155 (IAVSGISFPAFALGMLLIQVF) traverse the membrane as a helical segment. Residues 156–168 (SVELGWLPTVGAD) are Periplasmic-facing. A helical transmembrane segment spans residues 169 to 189 (SWQHYILPSLTLGAAVAAVMA). The Cytoplasmic portion of the chain corresponds to 190–228 (RFTRASFVDVLSEDYMRTARAKGVSETWVVLKHGLRNAM). The chain crosses the membrane as a helical span at residues 229 to 249 (IPVVTMMGLQFGFLLGGSIVV). At 250-277 (EKVFNWPGLGRLLVDSVEMRDYPVIQAE) the chain is on the periplasmic side. Residues 278–298 (ILLFSLEFILINLVVDVLYAA) form a helical membrane-spanning segment. The Cytoplasmic segment spans residues 299–306 (INPAIRYK).

It belongs to the binding-protein-dependent transport system permease family. In terms of assembly, the complex is composed of two ATP-binding proteins (GsiA), two transmembrane proteins (GsiC and GsiD) and a solute-binding protein (GsiB).

It is found in the cell inner membrane. In terms of biological role, part of the ABC transporter complex GsiABCD involved in glutathione import. Probably responsible for the translocation of the substrate across the membrane. The sequence is that of Glutathione transport system permease protein GsiC from Escherichia coli O6:H1 (strain CFT073 / ATCC 700928 / UPEC).